Consider the following 89-residue polypeptide: Small ribosomal subunit protein uS14A (89 aa).

This sequence belongs to the universal ribosomal protein uS14 family. As to quaternary structure, part of the 30S ribosomal subunit. Contacts proteins S3 and S10.

Its function is as follows. Binds 16S rRNA, required for the assembly of 30S particles and may also be responsible for determining the conformation of the 16S rRNA at the A site. The sequence is that of Small ribosomal subunit protein uS14A from Staphylococcus aureus (strain MRSA252).